Here is a 460-residue protein sequence, read N- to C-terminus: MNQINNSTLTFQCETGNYHTFCPISCVAWLYQKIEDSFFLVIGTKTCGYFLQNSMGVMIFAEPRYAMAELEEGDISAQINDYEELKRLCTQIKNDRNPSVIVFIGTCTTEIIKMDLEGIAPKLEAEIGIPIVVARANGLDYTFTQGEDTVLASLIQRCPSKDRETEKINKNNSSLFPSLSIFSKNKNESNLSQDKPNLPLVLFGSLPNSLTNQLEHELEKQNIKISGWLPTKNYKELPVIHEGDYVCGVNPYLARTATNLIRRRKCKLISAPFPIGPDGTRAWIEKICSIFNIEPTGLDEREKAVWDSLENYLPLVKGKSVFFMGDNLLELSIARFLIRCGMIVPEIGIPYLHKRYQEAEIKLLEDTCRKMQVPTPLIIEKPDNYEELKRIEQYRPDLVITGMANANPLEARGINTKWSVEFTFAQIHGFSNARDILELVTRSLRRKNYIQQLGWKELVE.

3 residues coordinate [4Fe-4S] cluster: Cys-22, Cys-47, and Cys-107.

It belongs to the BchN/ChlN family. In terms of assembly, protochlorophyllide reductase is composed of three subunits; ChlL, ChlN and ChlB. Forms a heterotetramer of two ChlB and two ChlN subunits. Requires [4Fe-4S] cluster as cofactor.

The protein resides in the plastid. Its subcellular location is the cyanelle. It carries out the reaction chlorophyllide a + oxidized 2[4Fe-4S]-[ferredoxin] + 2 ADP + 2 phosphate = protochlorophyllide a + reduced 2[4Fe-4S]-[ferredoxin] + 2 ATP + 2 H2O. It functions in the pathway porphyrin-containing compound metabolism; chlorophyll biosynthesis (light-independent). In terms of biological role, component of the dark-operative protochlorophyllide reductase (DPOR) that uses Mg-ATP and reduced ferredoxin to reduce ring D of protochlorophyllide (Pchlide) to form chlorophyllide a (Chlide). This reaction is light-independent. The NB-protein (ChlN-ChlB) is the catalytic component of the complex. This chain is Light-independent protochlorophyllide reductase subunit N, found in Cyanophora paradoxa.